An 858-amino-acid chain; its full sequence is Leucine--tRNA ligase (858 aa).

The 'HIGH' region signature appears at 42–52 (PYPSGRLHMGH). Positions 618–622 (KMSKS) match the 'KMSKS' region motif. Residue Lys-621 participates in ATP binding.

It belongs to the class-I aminoacyl-tRNA synthetase family.

It is found in the cytoplasm. It catalyses the reaction tRNA(Leu) + L-leucine + ATP = L-leucyl-tRNA(Leu) + AMP + diphosphate. The protein is Leucine--tRNA ligase of Vibrio atlanticus (strain LGP32) (Vibrio splendidus (strain Mel32)).